A 370-amino-acid chain; its full sequence is Ubiquinone biosynthesis O-methyltransferase, mitochondrial (370 aa).

A mitochondrion-targeting transit peptide spans 1–86 (MWRGGRLGSR…TYRTPWKRLY (86 aa)). Arginine 125 provides a ligand contact to S-adenosyl-L-methionine. N6-acetyllysine is present on residues lysine 144 and lysine 150. 2 residues coordinate S-adenosyl-L-methionine: glycine 155 and aspartate 176. Lysine 197 is subject to N6-acetyllysine. Serine 223 lines the S-adenosyl-L-methionine pocket. Residues glutamate 224, glutamate 227, and histidine 228 each coordinate Mg(2+). Residues 336-370 (AQEHQEPAESALKGETGALHANTSGSPSVREEQRT) form a disordered region.

Belongs to the class I-like SAM-binding methyltransferase superfamily. UbiG/COQ3 family. As to quaternary structure, component of a multi-subunit COQ enzyme complex, composed of at least COQ3, COQ4, COQ5, COQ6, COQ7 and COQ9. It depends on Mg(2+) as a cofactor.

The protein localises to the mitochondrion inner membrane. The catalysed reaction is 3,4-dihydroxy-5-(all-trans-decaprenyl)benzoate + S-adenosyl-L-methionine = 4-hydroxy-3-methoxy-5-(all-trans-decaprenyl)benzoate + S-adenosyl-L-homocysteine + H(+). It carries out the reaction a 3-demethylubiquinone + S-adenosyl-L-methionine = a ubiquinone + S-adenosyl-L-homocysteine. The enzyme catalyses 3-demethylubiquinol-10 + S-adenosyl-L-methionine = ubiquinol-10 + S-adenosyl-L-homocysteine + H(+). It participates in cofactor biosynthesis; ubiquinone biosynthesis. O-methyltransferase required for two non-consecutive steps during ubiquinone biosynthesis. Catalyzes the 2 O-methylation of 3,4-dihydroxy-5-(all-trans-decaprenyl)benzoic acid into 4-hydroxy-3-methoxy-5-(all-trans-decaprenyl)benzoic acid. Also catalyzes the last step of ubiquinone biosynthesis by mediating methylation of 3-demethylubiquinone into ubiquinone. Also able to mediate the methylation of 3-demethylubiquinol-10 into ubiquinol-10. This chain is Ubiquinone biosynthesis O-methyltransferase, mitochondrial, found in Mus musculus (Mouse).